A 264-amino-acid chain; its full sequence is Apolipoprotein A-I (264 aa).

The first 18 residues, 1–18, serve as a signal peptide directing secretion; sequence MKAVVLAVALVFLTGSQA. 2 tandem repeats follow at residues 67–88 and 89–110. Residues 67-264 form a 10 X approximate tandem repeats region; that stretch reads LNLLENWDTL…DKARETLTAQ (198 aa). The residue at position 109 (Met109) is a Methionine sulfoxide. Residues 111 to 121 form a 3; half-length repeat; sequence KDLEEVKQNVQ. Tandem repeats lie at residues 122–143, 144–165, and 166–187. A 7; truncated repeat occupies 188–207; the sequence is PHSDKLRESLAQRLAELKSN. Residues 208–229 form repeat 8; it reads PTLNEYHTRAKTHLNTFGEKAR. A 9; half-length repeat occupies 230-240; that stretch reads PALEDLRHTLI. Copy 10 of the repeat occupies 241–264; it reads PILDTLKTKVKSVIDKARETLTAQ.

It belongs to the apolipoprotein A1/A4/E family. As to quaternary structure, homodimer. Interacts with APOA1BP and CLU. Component of a sperm activating protein complex (SPAP), consisting of APOA1, an immunoglobulin heavy chain, an immunoglobulin light chain and albumin. Interacts with NDRG1. Interacts with SCGB3A2. Interacts with NAXE and YJEFN3. Post-translationally, glycosylated. Palmitoylated. In terms of processing, phosphorylation sites are present in the extracellular medium.

Its subcellular location is the secreted. Participates in the reverse transport of cholesterol from tissues to the liver for excretion by promoting cholesterol efflux from tissues and by acting as a cofactor for the lecithin cholesterol acyltransferase (LCAT). As part of the SPAP complex, activates spermatozoa motility. The polypeptide is Apolipoprotein A-I (Apoa1) (Mus pahari (Gairdner's shrew-mouse)).